We begin with the raw amino-acid sequence, 772 residues long: U3 small nucleolar RNA-associated protein 25 homolog (772 aa).

Residues 1 to 179 are disordered; it reads MGKRRNRGRS…SEEFTDVKHE (179 aa). 2 promotes p53/TP53 degradation regions span residues 1-201 and 589-651; these read MGKR…SQRP and VQLP…KKEE. Phosphoserine is present on Ser10. Basic and acidic residues predominate over residues 25–43; it reads RDFGEEHPFYDRVSKKEAK. 3 positions are modified to phosphoserine: Ser52, Ser60, and Ser64. A compositionally biased stretch (basic and acidic residues) spans 54 to 70; sequence DSSHSESESESEQEHVS. A compositionally biased stretch (acidic residues) spans 84-124; the sequence is EEEEEEEEEEEEEEEEEEEEEEEEEDDSAVGDAEMNEEAGS. The segment covering 127–136 has biased composition (low complexity); sequence GSVGEAAVSE. A compositionally biased stretch (basic and acidic residues) spans 169 to 179; it reads SSEEFTDVKHE. A represses p53/TP53 degradation region spans residues 652–713; the sequence is LNFTHICEYT…YELPTYPHFY (62 aa).

The protein belongs to the UTP25 family. Interacts with CAPN3; the interaction is required for CAPN3 translocation to the nucleolus. In terms of processing, phosphorylated. Phosphorylation is required to promote p53/TP53 degradation in the nucleolus which promotes cell cycle progression and liver development. In terms of tissue distribution, expressed in all tissues tested: brain, small intestine, large intestine, stomach, liver, spleen, thymus, lung, kidney and testes (at protein level).

Its subcellular location is the nucleus. The protein resides in the nucleolus. In terms of biological role, component of the ribosomal small subunit processome for the biogenesis of ribosomes, functions in pre-ribosomal RNA (pre-rRNA) processing. Essential for embryonic development in part through the regulation of p53 pathway. Controls the expansion growth of digestive organs and liver. Also involved in the sympathetic neuronal development. Mediates, with CAPN3, the proteasome-independent degradation of p53/TP53. The polypeptide is U3 small nucleolar RNA-associated protein 25 homolog (Mus musculus (Mouse)).